The primary structure comprises 315 residues: Methionyl-tRNA formyltransferase (315 aa).

113-116 is a binding site for (6S)-5,6,7,8-tetrahydrofolate; that stretch reads SILP.

It belongs to the Fmt family.

It catalyses the reaction L-methionyl-tRNA(fMet) + (6R)-10-formyltetrahydrofolate = N-formyl-L-methionyl-tRNA(fMet) + (6S)-5,6,7,8-tetrahydrofolate + H(+). Its function is as follows. Attaches a formyl group to the free amino group of methionyl-tRNA(fMet). The formyl group appears to play a dual role in the initiator identity of N-formylmethionyl-tRNA by promoting its recognition by IF2 and preventing the misappropriation of this tRNA by the elongation apparatus. The polypeptide is Methionyl-tRNA formyltransferase (Aliivibrio fischeri (strain MJ11) (Vibrio fischeri)).